Reading from the N-terminus, the 274-residue chain is NH(3)-dependent NAD(+) synthetase (274 aa).

46 to 53 (GISGGQDS) is a binding site for ATP. Residue D52 coordinates Mg(2+). R140 contributes to the deamido-NAD(+) binding site. An ATP-binding site is contributed by T160. E165 lines the Mg(2+) pocket. Deamido-NAD(+) contacts are provided by K173 and D180. ATP contacts are provided by K189 and T211. Residue 260–261 (HK) coordinates deamido-NAD(+).

This sequence belongs to the NAD synthetase family. In terms of assembly, homodimer.

It catalyses the reaction deamido-NAD(+) + NH4(+) + ATP = AMP + diphosphate + NAD(+) + H(+). Its pathway is cofactor biosynthesis; NAD(+) biosynthesis; NAD(+) from deamido-NAD(+) (ammonia route): step 1/1. Functionally, catalyzes the ATP-dependent amidation of deamido-NAD to form NAD. Uses ammonia as a nitrogen source. This chain is NH(3)-dependent NAD(+) synthetase, found in Rhodococcus erythropolis (strain PR4 / NBRC 100887).